The following is a 303-amino-acid chain: Probable serine/threonine-protein kinase FPV212 (303 aa).

The Protein kinase domain maps to 25–303 (WILGKQLGSG…NYESLKQMFL (279 aa)). Residues 31 to 39 (LGSGGFGLV) and K54 contribute to the ATP site. Residue D160 is the Proton acceptor of the active site.

It belongs to the protein kinase superfamily. Ser/Thr protein kinase family. Poxviruses subfamily.

It carries out the reaction L-seryl-[protein] + ATP = O-phospho-L-seryl-[protein] + ADP + H(+). The catalysed reaction is L-threonyl-[protein] + ATP = O-phospho-L-threonyl-[protein] + ADP + H(+). The protein is Probable serine/threonine-protein kinase FPV212 of Vertebrata (FPV).